We begin with the raw amino-acid sequence, 193 residues long: Orotate phosphoribosyltransferase (193 aa).

Residues Arg85, Lys89, His91, and 111–119 (DDVLTTGKS) each bind 5-phospho-alpha-D-ribose 1-diphosphate. Orotate-binding residues include Thr115 and Arg143.

Belongs to the purine/pyrimidine phosphoribosyltransferase family. PyrE subfamily. In terms of assembly, homodimer. It depends on Mg(2+) as a cofactor.

It carries out the reaction orotidine 5'-phosphate + diphosphate = orotate + 5-phospho-alpha-D-ribose 1-diphosphate. It functions in the pathway pyrimidine metabolism; UMP biosynthesis via de novo pathway; UMP from orotate: step 1/2. In terms of biological role, catalyzes the transfer of a ribosyl phosphate group from 5-phosphoribose 1-diphosphate to orotate, leading to the formation of orotidine monophosphate (OMP). The polypeptide is Orotate phosphoribosyltransferase (Pyrobaculum islandicum (strain DSM 4184 / JCM 9189 / GEO3)).